A 345-amino-acid chain; its full sequence is Probable RuBisCO transcriptional regulator (345 aa).

Positions 6–63 constitute an HTH lysR-type domain; the sequence is FTLDQLRILKAIASEGSFKRAADTLYVSQPAVSLQVQNLEKQLSVPLFDRGGRKAQLT. Residues 23 to 42 constitute a DNA-binding region (H-T-H motif); it reads FKRAADTLYVSQPAVSLQVQ. The segment at 311-345 is disordered; the sequence is LDPERLFANPYSSNNGDRQGDGKDGKGSIEIDSVT. The span at 328 to 339 shows a compositional bias: basic and acidic residues; sequence RQGDGKDGKGSI.

The protein belongs to the LysR transcriptional regulatory family.

In terms of biological role, trans-acting transcriptional regulator of RuBisCO genes (rbcL and rbcS) expression. In Synechocystis sp. (strain ATCC 27184 / PCC 6803 / Kazusa), this protein is Probable RuBisCO transcriptional regulator (rbcR).